We begin with the raw amino-acid sequence, 622 residues long: Dynein axonemal assembly factor 1 (622 aa).

Residues 1 to 80 (MHPEVSEPQA…ARNDRDDRGP (80 aa)) are disordered. Over residues 22-42 (AGDHGRAGPGVRKEEINETKE) the composition is skewed to basic and acidic residues. Low complexity predominate over residues 48–59 (STTSCQSQKQQS). Positions 62–80 (SRLDCRSGYARNDRDDRGP) are enriched in basic and acidic residues. LRR repeat units lie at residues 101–123 (ALND…EEYT), 124–145 (GLRC…QAQS), 146–167 (ELRC…EPLQ), 168–189 (KLDA…SCLP), 190–211 (VLNT…QHLR), and 215–236 (RLCV…SVLE). An LRRCT domain is found at 249–288 (NPVTKHIPNYRRTVTVRLKQLTYLDDRPVFPKDRACAEAW). Residues 326–336 (EERKKARDKGE) are compositionally biased toward basic and acidic residues. The interval 326–360 (EERKKARDKGETPLPDSEESSSTSPEAQDKPPLGE) is disordered. Residues 337–351 (TPLPDSEESSSTSPE) show a composition bias toward low complexity. A phosphoserine mark is found at Ser349, Ser464, and Ser487. Disordered regions lie at residues 481-503 (SSLS…EHTP) and 540-622 (LETQ…FGLD). Over residues 540-550 (LETQGQVFSTT) the composition is skewed to polar residues.

It belongs to the DNAAF1 family.

The protein resides in the cell projection. Its subcellular location is the cilium. Functionally, cilium-specific protein required for the stability of the ciliary architecture. Plays a role in cytoplasmic preassembly of dynein arms. Involved in regulation of microtubule-based cilia and actin-based brush border microvilli. The chain is Dynein axonemal assembly factor 1 (Dnaaf1) from Peromyscus leucopus (White-footed mouse).